The sequence spans 806 residues: Transitional endoplasmic reticulum ATPase (806 aa).

Residue alanine 2 is modified to N-acetylalanine. Phosphoserine occurs at positions 3 and 7. Residue lysine 8 forms a Glycyl lysine isopeptide (Lys-Gly) (interchain with G-Cter in SUMO2) linkage. A Phosphoserine modification is found at serine 13. A Glycyl lysine isopeptide (Lys-Gly) (interchain with G-Cter in SUMO2) cross-link involves residue lysine 18. Serine 37 is modified (phosphoserine). Residue 247–253 (PGTGKTL) participates in ATP binding. Lysine 315 bears the N6,N6,N6-trimethyllysine; by VCPKMT mark. Residues asparagine 348 and histidine 384 each contribute to the ATP site. Threonine 436 bears the Phosphothreonine mark. Position 462 is a phosphoserine (serine 462). N6-acetyllysine is present on residues lysine 502 and lysine 505. 521 to 526 (GCGKTL) is an ATP binding site. Lysine 668 carries the post-translational modification N6-acetyllysine; alternate. An N6-succinyllysine; alternate modification is found at lysine 668. Serine 702 carries the post-translational modification Phosphoserine. The segment at 708–727 (RRERERQTNPSAMEVEEDDP) is disordered. Lysine 754 carries the post-translational modification N6-acetyllysine. The interval 768–806 (FGSFRFPSGNQGGAGPSQGSGGGTGGSVYTEDNDDDLYG) is disordered. Residues serine 770, serine 775, and serine 787 each carry the phosphoserine modification. A compositionally biased stretch (gly residues) spans 777 to 793 (NQGGAGPSQGSGGGTGG). The segment at 797–806 (TEDNDDDLYG) is interaction with UBXN6. Residue tyrosine 805 is modified to Phosphotyrosine.

It belongs to the AAA ATPase family. Homohexamer. Forms a ring-shaped particle of 12.5 nm diameter, that displays 6-fold radial symmetry. Part of a ternary complex containing STX5A, NSFL1C and VCP. NSFL1C forms a homotrimer that binds to one end of a VCP homohexamer. The complex binds to membranes enriched in phosphatidylethanolamine-containing lipids and promotes Golgi membrane fusion. Binds to a heterodimer of NPLOC4 and UFD1, binding to this heterodimer inhibits Golgi-membrane fusion. Interaction with VCIP135 leads to dissociation of the complex via ATP hydrolysis by VCP. Part of a ternary complex containing NPLOC4, UFD1 and VCP. Interacts with NSFL1C-like protein p37; the complex has membrane fusion activity and is required for Golgi and endoplasmic reticulum biogenesis. Interacts with SELENOS and SYVN1, as well as with DERL1 (via SHP-box motif), DERL2 and DERL3; which probably transfer misfolded proteins from the ER to VCP. Interacts with SVIP and DERL1. Component of a complex required to couple retrotranslocation, ubiquitination and deglycosylation composed of NGLY1, SAKS1, AMFR, VCP and RAD23B. Part of a complex composed of STUB1/CHIP, VCP/p97, CHRNA3, and UBXN2A that modulates the ubiquitination and endoplasmic reticulum-associated degradation (ERAD) of CHRNA3. Within the complex UBXN2A acts as a scaffold protein required for the interaction of CHRNA3 with VCP/p97, this interaction also inhibits CHRNA3 ubiquitination by STUB1/CHIP and subsequently ERAD. Interacts with UBXN2A (via UBX domain); the interaction is required for the interaction of CHRNA3 in the STUB1-VCP-UBXN2A complex. Directly interacts with UBXN4 and RNF19A. Interacts with CASR. Interacts with UBE4B and YOD1. Interacts with clathrin. Interacts with RNF103. Interacts with TRIM13 and TRIM21. Component of a VCP/p97-AMFR/gp78 complex that participates in the final step of the endoplasmic reticulum-associated degradation (ERAD) of HMGCR. Interacts directly with AMFR/gp78 (via its VIM). Interacts with RHBDD1 (via C-terminal domain). Interacts with SPRTN; leading to recruitment to stalled replication forks. Interacts with WASHC5. Interacts with UBOX5. Interacts (via N-terminus) with UBXN7, UBXN8, and probably several other UBX domain-containing proteins (via UBX domains); the interactions are mutually exclusive with VIM-dependent interactions such as those with AMFR and SELENOS. Forms a complex with UBQLN1 and UBXN4. Interacts (via the PIM motif) with RNF31 (via the PUB domain). Interacts with RIGI and RNF125; interaction takes place when RIGI is ubiquitinated via 'Lys-63'-linked ubiquitin on its CARD domains, leading to recruit RNF125 and promote ubiquitination and degradation of RIGI. Interacts with BAG6. Interacts with UBXN10. Interacts with UBXN6; the interaction with UBXN6 is direct and competitive with UFD1. Forms a ternary complex with CAV1 and UBXN6. Interacts with PLAA, UBXN6 and YOD1; may form a complex involved in macroautophagy. Interacts with ANKZF1. Interacts with ubiquitin-binding protein FAF1. Interacts with ZFAND2B (via VIM motif); the interaction is direct. Interacts with ZFAND1 (via its ubiquitin-like region); this interaction occurs in an arsenite-dependent manner. Interacts with CCDC47. Interacts with LMBR1L and UBAC2. Interacts with ATXN3. Interacts with TEX264; bridging VCP to covalent DNA-protein cross-links (DPCs). It depends on Mg(2+) as a cofactor. In terms of processing, ISGylated. Post-translationally, methylation at Lys-315 catalyzed by VCPKMT is increased in the presence of ASPSCR1. Lys-315 methylation may decrease ATPase activity. Phosphorylated by tyrosine kinases in response to T-cell antigen receptor activation. Phosphorylated in mitotic cells.

The protein localises to the cytoplasm. It is found in the cytosol. It localises to the endoplasmic reticulum. Its subcellular location is the nucleus. The protein resides in the stress granule. It catalyses the reaction ATP + H2O = ADP + phosphate + H(+). Necessary for the fragmentation of Golgi stacks during mitosis and for their reassembly after mitosis. Involved in the formation of the transitional endoplasmic reticulum (tER). The transfer of membranes from the endoplasmic reticulum to the Golgi apparatus occurs via 50-70 nm transition vesicles which derive from part-rough, part-smooth transitional elements of the endoplasmic reticulum (tER). Vesicle budding from the tER is an ATP-dependent process. The ternary complex containing UFD1, VCP and NPLOC4 binds ubiquitinated proteins and is necessary for the export of misfolded proteins from the ER to the cytoplasm, where they are degraded by the proteasome. The NPLOC4-UFD1-VCP complex regulates spindle disassembly at the end of mitosis and is necessary for the formation of a closed nuclear envelope. Regulates E3 ubiquitin-protein ligase activity of RNF19A. Component of the VCP/p97-AMFR/gp78 complex that participates in the final step of the sterol-mediated ubiquitination and endoplasmic reticulum-associated degradation (ERAD) of HMGCR. Mediates the endoplasmic reticulum-associated degradation of CHRNA3 in cortical neurons as part of the STUB1-VCP-UBXN2A complex. Involved in endoplasmic reticulum stress-induced pre-emptive quality control, a mechanism that selectively attenuates the translocation of newly synthesized proteins into the endoplasmic reticulum and reroutes them to the cytosol for proteasomal degradation. Involved in clearance process by mediating G3BP1 extraction from stress granules. Also involved in DNA damage response: recruited to double-strand breaks (DSBs) sites in a RNF8- and RNF168-dependent manner and promotes the recruitment of TP53BP1 at DNA damage sites. Recruited to stalled replication forks by SPRTN: may act by mediating extraction of DNA polymerase eta (POLH) to prevent excessive translesion DNA synthesis and limit the incidence of mutations induced by DNA damage. Together with SPRTN metalloprotease, involved in the repair of covalent DNA-protein cross-links (DPCs) during DNA synthesis. Involved in interstrand cross-link repair in response to replication stress by mediating unloading of the ubiquitinated CMG helicase complex. Mediates extraction of PARP1 trapped to chromatin: recognizes and binds ubiquitinated PARP1 and promotes its removal. Required for cytoplasmic retrotranslocation of stressed/damaged mitochondrial outer-membrane proteins and their subsequent proteasomal degradation. Essential for the maturation of ubiquitin-containing autophagosomes and the clearance of ubiquitinated protein by autophagy. Acts as a negative regulator of type I interferon production by interacting with RIGI: interaction takes place when RIGI is ubiquitinated via 'Lys-63'-linked ubiquitin on its CARD domains, leading to recruit RNF125 and promote ubiquitination and degradation of RIGI. May play a role in the ubiquitin-dependent sorting of membrane proteins to lysosomes where they undergo degradation. May more particularly play a role in caveolins sorting in cells. By controlling the steady-state expression of the IGF1R receptor, indirectly regulates the insulin-like growth factor receptor signaling pathway. In Sus scrofa (Pig), this protein is Transitional endoplasmic reticulum ATPase (VCP).